A 307-amino-acid polypeptide reads, in one-letter code: MATITAAMVKDLRESTGAGMMDCKAALTENDGNMEAAQDWLRKKGLSKAAKKSGRVAAEGLIGALTKGTKGVVVEVNSETDFVARNGQFQGLVKMIAQVAFDVGADVEKIKAAKVGDVTIETAINDAIATIGENMTLRRAASLEVSQGVVSHYVHGAVIDGAGKMGVIVALESPGKADELAALGRQIAMHVAAANPLALDPSGLDPAVVKREKDVLADKYRQQGKPENVIEKIVESGLKTYYKEVCLLEQAFIHDTGKSVAQAVKEAEGKVGGAVKIAGFVRYALGEGIEKQESDFAAEVAAASGKK.

The involved in Mg(2+) ion dislocation from EF-Tu stretch occupies residues Thr-80–Val-83.

The protein belongs to the EF-Ts family.

It localises to the cytoplasm. Its function is as follows. Associates with the EF-Tu.GDP complex and induces the exchange of GDP to GTP. It remains bound to the aminoacyl-tRNA.EF-Tu.GTP complex up to the GTP hydrolysis stage on the ribosome. The polypeptide is Elongation factor Ts (Bradyrhizobium diazoefficiens (strain JCM 10833 / BCRC 13528 / IAM 13628 / NBRC 14792 / USDA 110)).